The primary structure comprises 729 residues: 1,4-alpha-glucan branching enzyme GlgB (729 aa).

Aspartate 407 serves as the catalytic Nucleophile. Residue glutamate 460 is the Proton donor of the active site.

Belongs to the glycosyl hydrolase 13 family. GlgB subfamily. As to quaternary structure, monomer.

The catalysed reaction is Transfers a segment of a (1-&gt;4)-alpha-D-glucan chain to a primary hydroxy group in a similar glucan chain.. It participates in glycan biosynthesis; glycogen biosynthesis. In terms of biological role, catalyzes the formation of the alpha-1,6-glucosidic linkages in glycogen by scission of a 1,4-alpha-linked oligosaccharide from growing alpha-1,4-glucan chains and the subsequent attachment of the oligosaccharide to the alpha-1,6 position. The protein is 1,4-alpha-glucan branching enzyme GlgB of Pseudoalteromonas atlantica (strain T6c / ATCC BAA-1087).